The primary structure comprises 245 residues: Haloacid dehalogenase-like hydrolase domain-containing protein At2g33255 (245 aa).

Thr2 carries the N-acetylalanine modification. Catalysis depends on Asp39, which acts as the Nucleophile. 3 residues coordinate Mg(2+): Asp39, Asp41, and Asp186. Asp41 acts as the Proton donor in catalysis.

It belongs to the HAD-like hydrolase superfamily. DOG/GPP family. The cofactor is Mg(2+).

The chain is Haloacid dehalogenase-like hydrolase domain-containing protein At2g33255 from Arabidopsis thaliana (Mouse-ear cress).